A 232-amino-acid polypeptide reads, in one-letter code: Transcriptional regulatory protein CpxR (232 aa).

In terms of domain architecture, Response regulatory spans 3 to 115 (KILLVDDDRE…ELVARIRAIL (113 aa)). Asp-51 carries the post-translational modification 4-aspartylphosphate. A DNA-binding region (ompR/PhoB-type) is located at residues 131 to 230 (SPTLEVDALS…LRGRGYLMVS (100 aa)).

As to quaternary structure, interacts with cognate sensor kinase CpxA. Phosphorylated by CpxA.

It is found in the cytoplasm. Its activity is regulated as follows. The two-component system is activated by envelope stress such as overexpression of some (misfolded) periplasmic proteins. Response regulator member of the two-component regulatory system CpxA/CpxR which responds to envelope stress response by activating or, in some cases, repressing expression of downstream genes. Binds to the promoter regions of various genes in vitro, including ompC, cpxP, ryhB and mrkA and, when CpxR is phosphorylated, pecO. Represses expression of the major pilin of type 3 fimbriae MrkA as well as that of type 1 fimbriae FimA. Repression of expression of MrkA appears to be indirect, mediated by activation of the iron homeostasis regulator RyhB. The protein is Transcriptional regulatory protein CpxR of Klebsiella pneumoniae subsp. pneumoniae (strain HS11286).